Consider the following 328-residue polypeptide: MAPTEMNIERKVEADVAVIPNDGKRAYVTFLAGNQDYWMGVVGLAKGLRKVKAAYPLVVAMLPDVPKEHRQILVAQGCIIREIEPVYPPENQAGYAMAYYVINYSKLRIWEFVEYEKMIYLDGDIQVFSNIDHLFDTPSGYLYAVKDCFCEGSWSKTPQYKIGYCQQSPEKVRWPMNSLGHVPPLYFNAGMLVFEPNLLTYEDLLQTVQVTTPTSFAEQPIPSTYNLVLAMLWRHPECIDLDQINVVHYCAKGSKPWRFTGEEEHMDREDIKMLVKKWWDIYEDTSLDYKTFVENESKLNPIVAALASKESGCDGLTSLAPSAAKSNP.

K106 is a catalytic residue. The Mn(2+) site is built by D122, D124, and H248.

Belongs to the glycosyltransferase 8 family. Galactosyltransferase subfamily. Requires a divalent metal cation as cofactor.

It localises to the cytoplasm. It catalyses the reaction myo-inositol + UDP-alpha-D-galactose = alpha-D-galactosyl-(1-&gt;3)-1D-myo-inositol + UDP + H(+). Functionally, galactinol synthase involved in the biosynthesis of raffinose family oligosaccharides (RFOs) that function as osmoprotectants. May promote plant stress tolerance. The sequence is that of Galactinol synthase 10 (GOLS10) from Arabidopsis thaliana (Mouse-ear cress).